A 687-amino-acid chain; its full sequence is Polyphosphate kinase (687 aa).

Asn45 lines the ATP pocket. Mg(2+) contacts are provided by Arg373 and Arg403. His433 acts as the Phosphohistidine intermediate in catalysis. ATP contacts are provided by Tyr466, Arg562, and His590. Residues 585 to 615 (DRFLEHDRVYVFENKGDKLVYLSSADWMTRN) form the PLD phosphodiesterase domain.

It belongs to the polyphosphate kinase 1 (PPK1) family. Mg(2+) serves as cofactor. Post-translationally, an intermediate of this reaction is the autophosphorylated ppk in which a phosphate is covalently linked to a histidine residue through a N-P bond.

It carries out the reaction [phosphate](n) + ATP = [phosphate](n+1) + ADP. Functionally, catalyzes the reversible transfer of the terminal phosphate of ATP to form a long-chain polyphosphate (polyP). In Yersinia pestis, this protein is Polyphosphate kinase.